A 562-amino-acid polypeptide reads, in one-letter code: NAD-dependent malic enzyme (562 aa).

Y101 (proton donor) is an active-site residue. R154 contributes to the NAD(+) binding site. K172 acts as the Proton acceptor in catalysis. A divalent metal cation is bound by residues E243, D244, and D267. Residues D267 and N415 each coordinate NAD(+).

It belongs to the malic enzymes family. In terms of assembly, homotetramer. It depends on Mg(2+) as a cofactor. Mn(2+) serves as cofactor.

It catalyses the reaction (S)-malate + NAD(+) = pyruvate + CO2 + NADH. The catalysed reaction is oxaloacetate + H(+) = pyruvate + CO2. The protein is NAD-dependent malic enzyme of Aliivibrio fischeri (strain MJ11) (Vibrio fischeri).